Here is a 76-residue protein sequence, read N- to C-terminus: Acyl carrier protein (76 aa).

The region spanning 2–76 (SDIAERVKKI…QAIDYIQSHT (75 aa)) is the Carrier domain. Serine 36 carries the O-(pantetheine 4'-phosphoryl)serine modification.

It belongs to the acyl carrier protein (ACP) family. Post-translationally, 4'-phosphopantetheine is transferred from CoA to a specific serine of apo-ACP by AcpS. This modification is essential for activity because fatty acids are bound in thioester linkage to the sulfhydryl of the prosthetic group.

It is found in the cytoplasm. It participates in lipid metabolism; fatty acid biosynthesis. Functionally, carrier of the growing fatty acid chain in fatty acid biosynthesis. This Methylococcus capsulatus (strain ATCC 33009 / NCIMB 11132 / Bath) protein is Acyl carrier protein.